Consider the following 131-residue polypeptide: Small ribosomal subunit protein bS6 (131 aa).

A disordered region spans residues 97 to 131 (TEASPMVKAKDERRRDVAEDLDEEEVDDVAEDSEE). The span at 104–114 (KAKDERRRDVA) shows a compositional bias: basic and acidic residues. A compositionally biased stretch (acidic residues) spans 115–131 (EDLDEEEVDDVAEDSEE).

The protein belongs to the bacterial ribosomal protein bS6 family.

Functionally, binds together with bS18 to 16S ribosomal RNA. This is Small ribosomal subunit protein bS6 from Proteus mirabilis (strain HI4320).